A 442-amino-acid polypeptide reads, in one-letter code: F-box protein KIB2 (442 aa).

In terms of domain architecture, F-box spans 62–109 (SKQPVLVLDLLRSILERLSFVDFHRGRCISLEWYSASESCLAVKNPTS). The Nuclear localization signal motif lies at 236–243 (HKKGDENY).

In terms of assembly, interacts with ASK7/BIN2/SK21.

The protein resides in the cytoplasm. It is found in the nucleus. The protein localises to the nucleolus. Its function is as follows. Component of SCF(ASK-cullin-F-box) E3 ubiquitin ligase complexes, which may mediate the ubiquitination and subsequent proteasomal degradation of target proteins. Required for brassinosteroid (BR) signal transduction. Mediates ASK7/BIN2/SK21 inactivation both by competing with substrate binding (e.g. BZR1) and by promoting its ubiquitination and subsequent proteasomal degradation. This is F-box protein KIB2 from Arabidopsis thaliana (Mouse-ear cress).